Reading from the N-terminus, the 215-residue chain is ATP phosphoribosyltransferase (215 aa).

This sequence belongs to the ATP phosphoribosyltransferase family. Short subfamily. In terms of assembly, heteromultimer composed of HisG and HisZ subunits.

Its subcellular location is the cytoplasm. It carries out the reaction 1-(5-phospho-beta-D-ribosyl)-ATP + diphosphate = 5-phospho-alpha-D-ribose 1-diphosphate + ATP. It functions in the pathway amino-acid biosynthesis; L-histidine biosynthesis; L-histidine from 5-phospho-alpha-D-ribose 1-diphosphate: step 1/9. In terms of biological role, catalyzes the condensation of ATP and 5-phosphoribose 1-diphosphate to form N'-(5'-phosphoribosyl)-ATP (PR-ATP). Has a crucial role in the pathway because the rate of histidine biosynthesis seems to be controlled primarily by regulation of HisG enzymatic activity. This is ATP phosphoribosyltransferase from Lachnoclostridium phytofermentans (strain ATCC 700394 / DSM 18823 / ISDg) (Clostridium phytofermentans).